A 181-amino-acid polypeptide reads, in one-letter code: Isopentenyl-diphosphate Delta-isomerase (181 aa).

The Mn(2+) site is built by histidine 25 and histidine 32. Residues 30-164 enclose the Nudix hydrolase domain; that stretch reads PLHLAFSCWL…PWAFSPWMVM (135 aa). Cysteine 67 is an active-site residue. Cysteine 67 serves as a coordination point for Mg(2+). Histidine 69 contacts Mn(2+). Glutamate 87 is a binding site for Mg(2+). The Mn(2+) site is built by glutamate 114 and glutamate 116. The active site involves glutamate 116.

Belongs to the IPP isomerase type 1 family. In terms of assembly, homodimer. The cofactor is Mg(2+). It depends on Mn(2+) as a cofactor.

It is found in the cytoplasm. The enzyme catalyses isopentenyl diphosphate = dimethylallyl diphosphate. Its pathway is isoprenoid biosynthesis; dimethylallyl diphosphate biosynthesis; dimethylallyl diphosphate from isopentenyl diphosphate: step 1/1. Its function is as follows. Catalyzes the 1,3-allylic rearrangement of the homoallylic substrate isopentenyl (IPP) to its highly electrophilic allylic isomer, dimethylallyl diphosphate (DMAPP). The polypeptide is Isopentenyl-diphosphate Delta-isomerase (Salmonella choleraesuis (strain SC-B67)).